Here is a 539-residue protein sequence, read N- to C-terminus: Alpha-copaene synthase (539 aa).

The Mg(2+) site is built by aspartate 290 and aspartate 294. Positions 290, 294, and 432 each coordinate substrate. A DDXXD motif motif is present at residues 290–294 (DDTFD).

Belongs to the terpene synthase family. As to quaternary structure, monomer. It depends on Mg(2+) as a cofactor. Mn(2+) serves as cofactor.

Its subcellular location is the cytoplasm. The enzyme catalyses (2E,6E)-farnesyl diphosphate = alpha-copaene + diphosphate. It catalyses the reaction (2E,6E)-farnesyl diphosphate = (+)-germacrene D + diphosphate. It carries out the reaction (2E,6E)-farnesyl diphosphate = (-)-(E)-beta-caryophyllene + diphosphate. The catalysed reaction is (2E,6E)-farnesyl diphosphate = delta-cadinene + diphosphate. It functions in the pathway secondary metabolite biosynthesis; terpenoid biosynthesis. Its function is as follows. Converts farnesyl diphosphate to the bicyclic olefins alpha-copaene, (E)-beta-caryophyllene, and to the macrocyclic sesquiterpene germacrene D. Also mediates the biosynthesis of minor sesquiterpene hydrocarbons including delta-cadinene. Involved in indirect defense by producing volatile signals attracting natural enemies of herbivores. In Zea mays (Maize), this protein is Alpha-copaene synthase.